The chain runs to 68 residues: Sec-independent protein translocase protein TatA (68 aa).

A helical transmembrane segment spans residues 1-21; it reads MGSFSIWHWLIVLAVVLLLFG. Residues 48-68 form a disordered region; that stretch reads AAAADKSIDGKTVDHKSDEVR. The segment covering 53–68 has biased composition (basic and acidic residues); the sequence is KSIDGKTVDHKSDEVR.

This sequence belongs to the TatA/E family. The Tat system comprises two distinct complexes: a TatABC complex, containing multiple copies of TatA, TatB and TatC subunits, and a separate TatA complex, containing only TatA subunits. Substrates initially bind to the TatABC complex, which probably triggers association of the separate TatA complex to form the active translocon.

The protein localises to the cell inner membrane. In terms of biological role, part of the twin-arginine translocation (Tat) system that transports large folded proteins containing a characteristic twin-arginine motif in their signal peptide across membranes. TatA could form the protein-conducting channel of the Tat system. In Sinorhizobium medicae (strain WSM419) (Ensifer medicae), this protein is Sec-independent protein translocase protein TatA.